The following is a 262-amino-acid chain: Type III pantothenate kinase (262 aa).

Residue 10 to 17 participates in ATP binding; sequence DIGNTTTV. Substrate is bound at residue 110 to 113; sequence GADR. Asp112 acts as the Proton acceptor in catalysis. Asp134 lines the K(+) pocket. ATP is bound at residue Thr137. Thr189 contacts substrate.

This sequence belongs to the type III pantothenate kinase family. Homodimer. The cofactor is NH4(+). K(+) serves as cofactor.

It is found in the cytoplasm. It catalyses the reaction (R)-pantothenate + ATP = (R)-4'-phosphopantothenate + ADP + H(+). Its pathway is cofactor biosynthesis; coenzyme A biosynthesis; CoA from (R)-pantothenate: step 1/5. Functionally, catalyzes the phosphorylation of pantothenate (Pan), the first step in CoA biosynthesis. This chain is Type III pantothenate kinase, found in Deinococcus radiodurans (strain ATCC 13939 / DSM 20539 / JCM 16871 / CCUG 27074 / LMG 4051 / NBRC 15346 / NCIMB 9279 / VKM B-1422 / R1).